A 204-amino-acid polypeptide reads, in one-letter code: VQ motif-containing protein 13 (204 aa).

Residues 1-12 show a composition bias toward basic and acidic residues; it reads MEKSPRYRDKAK. Residues 1–26 are disordered; it reads MEKSPRYRDKAKNLLPSPSSCTTTPT. Over residues 16-26 the composition is skewed to low complexity; that stretch reads PSPSSCTTTPT. S17 is subject to Phosphoserine. The VQ motif lies at 46–55; it reads FKQVVQLLTG. The tract at residues 56–90 is disordered; sequence IPKNPTHQPDPRFPPFHSIPPIKAVTNKKQSSSFR. S73 and S128 each carry phosphoserine. Phosphothreonine is present on T131. The segment at 133-204 is disordered; the sequence is LMSDPFYRPG…HSPAPSPHDH (72 aa). The segment covering 143–152 has biased composition (low complexity); it reads SFSQSPSDSK. Phosphoserine is present on residues S147 and S173. T177 and T192 each carry phosphothreonine. S196 and S200 each carry phosphoserine.

In terms of processing, phosphorylated on serine and threonine residues by MPK6.

The protein localises to the nucleus. In terms of biological role, may modulate WRKY transcription factor activities. The chain is VQ motif-containing protein 13 from Arabidopsis thaliana (Mouse-ear cress).